A 425-amino-acid polypeptide reads, in one-letter code: Dual-specificity RNA methyltransferase RlmN (425 aa).

Residue Glu-136 is the Proton acceptor of the active site. A Radical SAM core domain is found at 142 to 389; the sequence is GDDRGTLCVS…VRTPRGRDIL (248 aa). Cys-149 and Cys-392 are joined by a disulfide. 3 residues coordinate [4Fe-4S] cluster: Cys-156, Cys-160, and Cys-163. S-adenosyl-L-methionine is bound by residues 218–219, Ser-250, 272–274, and Asn-349; these read GE and SLH. Cys-392 serves as the catalytic S-methylcysteine intermediate.

This sequence belongs to the radical SAM superfamily. RlmN family. [4Fe-4S] cluster is required as a cofactor.

The protein resides in the cytoplasm. It catalyses the reaction adenosine(2503) in 23S rRNA + 2 reduced [2Fe-2S]-[ferredoxin] + 2 S-adenosyl-L-methionine = 2-methyladenosine(2503) in 23S rRNA + 5'-deoxyadenosine + L-methionine + 2 oxidized [2Fe-2S]-[ferredoxin] + S-adenosyl-L-homocysteine. The catalysed reaction is adenosine(37) in tRNA + 2 reduced [2Fe-2S]-[ferredoxin] + 2 S-adenosyl-L-methionine = 2-methyladenosine(37) in tRNA + 5'-deoxyadenosine + L-methionine + 2 oxidized [2Fe-2S]-[ferredoxin] + S-adenosyl-L-homocysteine. Its function is as follows. Specifically methylates position 2 of adenine 2503 in 23S rRNA and position 2 of adenine 37 in tRNAs. m2A2503 modification seems to play a crucial role in the proofreading step occurring at the peptidyl transferase center and thus would serve to optimize ribosomal fidelity. This is Dual-specificity RNA methyltransferase RlmN from Methylorubrum populi (strain ATCC BAA-705 / NCIMB 13946 / BJ001) (Methylobacterium populi).